Reading from the N-terminus, the 261-residue chain is DNA repair protein RecO (261 aa).

This sequence belongs to the RecO family.

Involved in DNA repair and RecF pathway recombination. This is DNA repair protein RecO from Chlorobium phaeobacteroides (strain BS1).